The chain runs to 179 residues: Adenine phosphoribosyltransferase (179 aa).

Belongs to the purine/pyrimidine phosphoribosyltransferase family. As to quaternary structure, homodimer.

Its subcellular location is the cytoplasm. It carries out the reaction AMP + diphosphate = 5-phospho-alpha-D-ribose 1-diphosphate + adenine. The protein operates within purine metabolism; AMP biosynthesis via salvage pathway; AMP from adenine: step 1/1. Its function is as follows. Catalyzes a salvage reaction resulting in the formation of AMP, that is energically less costly than de novo synthesis. The chain is Adenine phosphoribosyltransferase from Bradyrhizobium sp. (strain BTAi1 / ATCC BAA-1182).